The chain runs to 337 residues: Tryptophan--tRNA ligase 2 (337 aa).

Residues 13-15 and 22-23 contribute to the ATP site; these read QPT and GN. The short motif at 14–23 is the 'HIGH' region element; that stretch reads PTAGSFHLGN. Aspartate 139 contributes to the L-tryptophan binding site. ATP is bound by residues 151–153, isoleucine 190, and 199–203; these read GED and KMSKS. A 'KMSKS' region motif is present at residues 199 to 203; sequence KMSKS.

The protein belongs to the class-I aminoacyl-tRNA synthetase family. In terms of assembly, homodimer.

The protein resides in the cytoplasm. The enzyme catalyses tRNA(Trp) + L-tryptophan + ATP = L-tryptophyl-tRNA(Trp) + AMP + diphosphate + H(+). Catalyzes the attachment of tryptophan to tRNA(Trp). This chain is Tryptophan--tRNA ligase 2, found in Streptomyces avermitilis (strain ATCC 31267 / DSM 46492 / JCM 5070 / NBRC 14893 / NCIMB 12804 / NRRL 8165 / MA-4680).